A 625-amino-acid chain; its full sequence is Glyco-Gag protein (625 aa).

The Cytoplasmic portion of the chain corresponds to 1–66 (LGDVSEASGA…SVFRRNRAAR (66 aa)). Residues 67–86 (LVCLSIVLSFVCSLLFWTAS) traverse the membrane as a helical segment. The Extracellular portion of the chain corresponds to 87–625 (KNMGQTVTTP…PQTSLLTLDD (539 aa)). The N-linked (GlcNAc...) asparagine; by host glycan is linked to N113. Residues 195-305 (PSPTAPILPS…STTSRAFPLR (111 aa)) form a disordered region. An N-linked (GlcNAc...) asparagine; by host glycan is attached at N479. Composition is skewed to basic and acidic residues over residues 522-553 (ETPE…EKER) and 573-606 (RQDR…DCPK). Residues 522 to 625 (ETPEEREERV…PQTSLLTLDD (104 aa)) are disordered.

In terms of processing, glycosylated by host. Post-translationally, cleaved by host near the middle of the molecule, releasing the c-terminal half containing capsid and nucleoprotein domains op GAG.

It localises to the host cell membrane. In terms of biological role, plays a role in viral particle release. Presumably acts by facilitating the fission of the virion bud at the cell surface. May prevent the antiviral activity of murine APOBEC3. This AKV murine leukemia virus (AKR (endogenous) murine leukemia virus) protein is Glyco-Gag protein.